Consider the following 230-residue polypeptide: Transmembrane 4 L6 family member 20 (230 aa).

Residues 1-11 (MTCCEGWTSCN) lie on the Lumenal side of the membrane. The helical transmembrane segment at 12–32 (GFSLLVLLLLGVTLNAIPLIL) threads the bilayer. Residues 33–44 (NFVDEDQFFENP) are Cytoplasmic-facing. A helical transmembrane segment spans residues 45 to 65 (ISCFEWWFPGIIGAGVMAIPA). Over 66–83 (TTMSLAARKRACCNNKTG) the chain is Lumenal. Residues 84–104 (MFLSSLLNAITVIGAAYCLLV) traverse the membrane as a helical segment. Over 105–185 (SIQALAEGPL…HFNSIENQHR (81 aa)) the chain is Cytoplasmic. A helical membrane pass occupies residues 186-206 (IIHFSVFLGLLLVGILEILFG). The Lumenal portion of the chain corresponds to 207 to 230 (LSQIIIGFFGCLCGGVSNGRSQIV).

Belongs to the L6 tetraspanin family. In terms of processing, glycosylated at Asn-132 in presence of ceramide which inverts the orientation of TM4SF20 in membranes exposing these residues to the endoplasmic reticulum lumen. Cleaved by signal peptidase at Ser-14 but the peptide does not act as a signal peptide. Cleavage is inhibited by ceramide which inverts the orientation of TM4SF20 in membranes exposing the N-terminus to the cytosol and not to the endoplasmic reticulum lumen.

It is found in the membrane. The protein resides in the endoplasmic reticulum membrane. Its function is as follows. Polytopic transmembrane protein. Inhibits regulated intramembrane proteolysis (RIP) of CREB3L1, inhibiting its activation and the induction of collagen synthesis. In response to ceramide, which alters TM4SF20 membrane topology, stimulates RIP activation of CREB3L1. Ceramide reverses the direction through which transmembrane helices are translocated into the endoplasmic reticulum membrane during translation of TM4SF20, this mechanism is called 'regulated alternative translocation' (RAT) and regulates the function of the transmembrane protein. In Bos taurus (Bovine), this protein is Transmembrane 4 L6 family member 20 (TM4SF20).